Consider the following 389-residue polypeptide: Heat-inducible transcription repressor HrcA (389 aa).

This sequence belongs to the HrcA family.

Functionally, negative regulator of class I heat shock genes (grpE-dnaK-dnaJ and groELS operons). Prevents heat-shock induction of these operons. This Synechococcus sp. (strain JA-2-3B'a(2-13)) (Cyanobacteria bacterium Yellowstone B-Prime) protein is Heat-inducible transcription repressor HrcA.